We begin with the raw amino-acid sequence, 828 residues long: DNA gyrase subunit A (828 aa).

Residues 32–497 (LPDVRDGLKP…EVLSLEDEDL (466 aa)) form the Topo IIA-type catalytic domain. Tyrosine 120 acts as the O-(5'-phospho-DNA)-tyrosine intermediate in catalysis. A GyrA-box motif is present at residues 524-530 (QKRGGRG).

The protein belongs to the type II topoisomerase GyrA/ParC subunit family. Heterotetramer, composed of two GyrA and two GyrB chains. In the heterotetramer, GyrA contains the active site tyrosine that forms a transient covalent intermediate with DNA, while GyrB binds cofactors and catalyzes ATP hydrolysis.

Its subcellular location is the cytoplasm. It carries out the reaction ATP-dependent breakage, passage and rejoining of double-stranded DNA.. A type II topoisomerase that negatively supercoils closed circular double-stranded (ds) DNA in an ATP-dependent manner to modulate DNA topology and maintain chromosomes in an underwound state. Negative supercoiling favors strand separation, and DNA replication, transcription, recombination and repair, all of which involve strand separation. Also able to catalyze the interconversion of other topological isomers of dsDNA rings, including catenanes and knotted rings. Type II topoisomerases break and join 2 DNA strands simultaneously in an ATP-dependent manner. The polypeptide is DNA gyrase subunit A (Streptococcus pyogenes serotype M6 (strain ATCC BAA-946 / MGAS10394)).